A 213-amino-acid chain; its full sequence is Thymidine kinase (213 aa).

Residues 20–27 (GPMFSGKT) and 93–96 (DEAQ) contribute to the ATP site. Glu-94 (proton acceptor) is an active-site residue. Residues Cys-150, Cys-153, Cys-185, and His-188 each coordinate Zn(2+).

This sequence belongs to the thymidine kinase family. Homotetramer.

It localises to the cytoplasm. It catalyses the reaction thymidine + ATP = dTMP + ADP + H(+). The protein is Thymidine kinase of Mycoplasma genitalium (strain ATCC 33530 / DSM 19775 / NCTC 10195 / G37) (Mycoplasmoides genitalium).